We begin with the raw amino-acid sequence, 342 residues long: Tetraacyldisaccharide 4'-kinase (342 aa).

68 to 75 (TVGGTGKT) is a binding site for ATP.

Belongs to the LpxK family.

It carries out the reaction a lipid A disaccharide + ATP = a lipid IVA + ADP + H(+). It functions in the pathway glycolipid biosynthesis; lipid IV(A) biosynthesis; lipid IV(A) from (3R)-3-hydroxytetradecanoyl-[acyl-carrier-protein] and UDP-N-acetyl-alpha-D-glucosamine: step 6/6. Functionally, transfers the gamma-phosphate of ATP to the 4'-position of a tetraacyldisaccharide 1-phosphate intermediate (termed DS-1-P) to form tetraacyldisaccharide 1,4'-bis-phosphate (lipid IVA). This chain is Tetraacyldisaccharide 4'-kinase, found in Burkholderia vietnamiensis (strain G4 / LMG 22486) (Burkholderia cepacia (strain R1808)).